Consider the following 258-residue polypeptide: 4,5-dihydroxyphthalate decarboxylase (258 aa).

The protein to P.testosteroni DHP decarboxylase.

The enzyme catalyses 4,5-dihydroxyphthalate + H(+) = 3,4-dihydroxybenzoate + CO2. Its pathway is xenobiotic degradation; phthalate degradation; 3,4-dihydroxybenzoate from phthalate: step 3/3. The sequence is that of 4,5-dihydroxyphthalate decarboxylase (pht5) from Pseudomonas putida (Arthrobacter siderocapsulatus).